We begin with the raw amino-acid sequence, 130 residues long: MAKPAEKKTKKKIKRVITDGVAHVHASFNNTIVTITDRQGNALSWATSGGAGFRGSRKSTPFAAQVAAEKAGRAALDYGVKSLEVRIKGPGPGRESAVRSLNNVGYKITNIIDVTPIPHNGCRPPKKRRV.

Belongs to the universal ribosomal protein uS11 family. Part of the 30S ribosomal subunit. Interacts with proteins S7 and S18. Binds to IF-3.

Its function is as follows. Located on the platform of the 30S subunit, it bridges several disparate RNA helices of the 16S rRNA. Forms part of the Shine-Dalgarno cleft in the 70S ribosome. This Xanthomonas campestris pv. campestris (strain B100) protein is Small ribosomal subunit protein uS11.